We begin with the raw amino-acid sequence, 257 residues long: Nickel import system ATP-binding protein NikD (257 aa).

Positions 4–245 (IDIQNLTIKN…HLHPYTERLI (242 aa)) constitute an ABC transporter domain. An ATP-binding site is contributed by 37–44 (GESGAGKS).

This sequence belongs to the ABC transporter superfamily. As to quaternary structure, the complex is composed of two ATP-binding proteins (NikD and NikE), two transmembrane proteins (NikB and NikC) and a solute-binding protein (NikA).

The protein localises to the cell membrane. The enzyme catalyses Ni(2+)(out) + ATP + H2O = Ni(2+)(in) + ADP + phosphate + H(+). Part of the ABC transporter complex NikABCDE (Opp2) involved in nickel import. Probably responsible for energy coupling to the transport system. This is Nickel import system ATP-binding protein NikD from Staphylococcus aureus (strain MSSA476).